The primary structure comprises 1348 residues: Phosphoribosylformylglycinamidine synthase (1348 aa).

Residues 300–311 (GAATGAGGEIRD) and Ala-701 each bind ATP. The Mg(2+) site is built by Asp-702, Glu-741, Asn-745, and Asp-941. Ser-943 serves as a coordination point for ATP. The Glutamine amidotransferase type-1 domain occupies 1099–1348 (VAILREQGVN…MFRNARVWCG (250 aa)). Cys-1192 (nucleophile) is an active-site residue. Residues His-1313 and Glu-1315 contribute to the active site.

The protein in the N-terminal section; belongs to the FGAMS family. In terms of assembly, monomer.

It is found in the cytoplasm. The enzyme catalyses N(2)-formyl-N(1)-(5-phospho-beta-D-ribosyl)glycinamide + L-glutamine + ATP + H2O = 2-formamido-N(1)-(5-O-phospho-beta-D-ribosyl)acetamidine + L-glutamate + ADP + phosphate + H(+). Its pathway is purine metabolism; IMP biosynthesis via de novo pathway; 5-amino-1-(5-phospho-D-ribosyl)imidazole from N(2)-formyl-N(1)-(5-phospho-D-ribosyl)glycinamide: step 1/2. Phosphoribosylformylglycinamidine synthase involved in the purines biosynthetic pathway. Catalyzes the ATP-dependent conversion of formylglycinamide ribonucleotide (FGAR) and glutamine to yield formylglycinamidine ribonucleotide (FGAM) and glutamate. The sequence is that of Phosphoribosylformylglycinamidine synthase from Xanthomonas campestris pv. campestris (strain ATCC 33913 / DSM 3586 / NCPPB 528 / LMG 568 / P 25).